Here is a 578-residue protein sequence, read N- to C-terminus: Isocitrate dehydrogenase kinase/phosphatase (578 aa).

Residues 315–321 (APGIRGM) and lysine 336 each bind ATP. Aspartate 371 is a catalytic residue.

It belongs to the AceK family.

The protein resides in the cytoplasm. It carries out the reaction L-seryl-[isocitrate dehydrogenase] + ATP = O-phospho-L-seryl-[isocitrate dehydrogenase] + ADP + H(+). Bifunctional enzyme which can phosphorylate or dephosphorylate isocitrate dehydrogenase (IDH) on a specific serine residue. This is a regulatory mechanism which enables bacteria to bypass the Krebs cycle via the glyoxylate shunt in response to the source of carbon. When bacteria are grown on glucose, IDH is fully active and unphosphorylated, but when grown on acetate or ethanol, the activity of IDH declines drastically concomitant with its phosphorylation. The sequence is that of Isocitrate dehydrogenase kinase/phosphatase from Escherichia coli O17:K52:H18 (strain UMN026 / ExPEC).